A 155-amino-acid chain; its full sequence is MVKEFNTQTELSVRLEALWAVLSKDFITVVPKVLPHIVKDVQLIEGDGGVGTILIFNFLPEVSPSYQREEITEFDESSHEIGLQVIEGGYLSQGLSYYKTTFKLSEIEEDKTLVNVKISYDHDSDIEEKVTPTKTSQSTLMYLRRLERYLSNGSA.

Trans-zeatin contacts are provided by residues leucine 22, glutamine 67, glutamate 69, and threonine 139 to tyrosine 142. Residue glutamine 67 coordinates gibberellin A3. Threonine 139 contributes to the gibberellin A3 binding site.

It belongs to the BetVI family. In terms of assembly, monomer.

In terms of biological role, binds the cytokinin trans-zeatin in vitro. Binds gibberellin A3 (GA3) in vitro. The protein is Phytohormone-binding protein CSBP of Vigna radiata var. radiata (Mung bean).